The chain runs to 29 residues: Galanin (29 aa).

Ala29 carries the alanine amide modification.

The protein belongs to the galanin family.

It localises to the secreted. Functionally, contracts smooth muscle of the gastrointestinal and genitourinary tract, regulates growth hormone release, modulates insulin release, and may be involved in the control of adrenal secretion. The polypeptide is Galanin (GAL) (Alligator mississippiensis (American alligator)).